The primary structure comprises 492 residues: Catalase-1/2 (492 aa).

Residues His-65 and Asn-138 contribute to the active site. Tyr-348 contacts heme.

This sequence belongs to the catalase family. Homotetramer. Heme is required as a cofactor.

The protein localises to the cytoplasm. Its subcellular location is the cytosol. The protein resides in the peroxisome matrix. The enzyme catalyses 2 H2O2 = O2 + 2 H2O. In terms of biological role, catalyzes the degradation of hydrogen peroxide (H(2)O(2)) generated by peroxisomal oxidases to water and oxygen, thereby protecting cells from the toxic effects of hydrogen peroxide. This chain is Catalase-1/2 (CAT1), found in Glycine max (Soybean).